Reading from the N-terminus, the 134-residue chain is Large ribosomal subunit protein eL32 (134 aa).

It belongs to the eukaryotic ribosomal protein eL32 family.

The sequence is that of Large ribosomal subunit protein eL32 (RpL32) from Drosophila melanogaster (Fruit fly).